A 368-amino-acid polypeptide reads, in one-letter code: Phospho-N-acetylmuramoyl-pentapeptide-transferase (368 aa).

Transmembrane regions (helical) follow at residues 30-50 (AAAI…IAYL), 72-92 (LPTM…FLWA), 99-119 (VWLV…DDYL), 135-155 (LIGQ…DPSM), 170-190 (LTIN…TAIS), 201-221 (GLAA…AYLA), 238-258 (GGEV…FLWF), 265-286 (IIMG…ALLI), and 345-365 (KIVI…LMTL).

Belongs to the glycosyltransferase 4 family. MraY subfamily. The cofactor is Mg(2+).

It localises to the cell inner membrane. The enzyme catalyses UDP-N-acetyl-alpha-D-muramoyl-L-alanyl-gamma-D-glutamyl-meso-2,6-diaminopimeloyl-D-alanyl-D-alanine + di-trans,octa-cis-undecaprenyl phosphate = di-trans,octa-cis-undecaprenyl diphospho-N-acetyl-alpha-D-muramoyl-L-alanyl-D-glutamyl-meso-2,6-diaminopimeloyl-D-alanyl-D-alanine + UMP. It participates in cell wall biogenesis; peptidoglycan biosynthesis. Its function is as follows. Catalyzes the initial step of the lipid cycle reactions in the biosynthesis of the cell wall peptidoglycan: transfers peptidoglycan precursor phospho-MurNAc-pentapeptide from UDP-MurNAc-pentapeptide onto the lipid carrier undecaprenyl phosphate, yielding undecaprenyl-pyrophosphoryl-MurNAc-pentapeptide, known as lipid I. The sequence is that of Phospho-N-acetylmuramoyl-pentapeptide-transferase from Chlorobium chlorochromatii (strain CaD3).